The sequence spans 165 residues: Putative BTB/POZ domain-containing protein At2g40440 (165 aa).

The region spanning 24–98 (VDVRLKAGDS…IYSDGSMLSA (75 aa)) is the BTB domain.

Its pathway is protein modification; protein ubiquitination. In terms of biological role, may act as a substrate-specific adapter of an E3 ubiquitin-protein ligase complex (CUL3-RBX1-BTB) which mediates the ubiquitination and subsequent proteasomal degradation of target proteins. In Arabidopsis thaliana (Mouse-ear cress), this protein is Putative BTB/POZ domain-containing protein At2g40440.